Here is a 199-residue protein sequence, read N- to C-terminus: Thymidine kinase (199 aa).

Residues 15 to 22 (GSMFSGKS) and 88 to 91 (DEIQ) each bind ATP. The active-site Proton acceptor is the E89. Zn(2+) contacts are provided by C145, C148, C183, and H186.

Belongs to the thymidine kinase family. Homotetramer.

It is found in the cytoplasm. The catalysed reaction is thymidine + ATP = dTMP + ADP + H(+). The chain is Thymidine kinase from Staphylococcus haemolyticus (strain JCSC1435).